The chain runs to 320 residues: Probable cell division protein WhiA (320 aa).

Residues Thr276–Ala310 constitute a DNA-binding region (H-T-H motif).

This sequence belongs to the WhiA family.

In terms of biological role, involved in cell division and chromosome segregation. In Geobacillus sp. (strain WCH70), this protein is Probable cell division protein WhiA.